The following is an 80-amino-acid chain: Putative membrane protein insertion efficiency factor (80 aa).

The interval 60 to 80 (SKTGKDPVPDRFSLKRNQEGE) is disordered. The span at 62 to 80 (TGKDPVPDRFSLKRNQEGE) shows a compositional bias: basic and acidic residues.

Belongs to the UPF0161 family.

The protein localises to the cell membrane. Its function is as follows. Could be involved in insertion of integral membrane proteins into the membrane. The chain is Putative membrane protein insertion efficiency factor from Streptococcus pneumoniae serotype 4 (strain ATCC BAA-334 / TIGR4).